The sequence spans 165 residues: UPF0763 protein NIS_0363 (165 aa).

It belongs to the UPF0763 family.

The sequence is that of UPF0763 protein NIS_0363 from Nitratiruptor sp. (strain SB155-2).